The following is an 849-amino-acid chain: Protein PTHB1 (849 aa).

Residues Met-1–Lys-407 form a seven-bladed beta-propeller region. Positions Leu-825 to Ser-849 are disordered. Residues Ser-828–Ser-849 are compositionally biased toward polar residues.

It localises to the cell projection. The protein resides in the cilium membrane. Its subcellular location is the cytoplasm. The protein localises to the cytoskeleton. It is found in the microtubule organizing center. It localises to the centrosome. The protein resides in the centriolar satellite. Its function is as follows. Required for ciliogenesis. The protein is Protein PTHB1 (bbs9) of Xenopus laevis (African clawed frog).